Consider the following 205-residue polypeptide: MVYSMDLMPIILASQSESRLRLLKKINIVPSQIIPANIDESSLPAELPKNLALRLAIQKADKIAQNIEDGYVIAADTVVAVGRRILPKTITDFDVEYCLKMLSGRRHRVFTGVKITKVKHNNIIAFNTRTVESIVKVKRLTPQEIATYVATKQGLNKAGGHSIEGMWECFIQFMRGSYSNIMGLPLFETRNMLFSLGFDCIRSNQ.

Asp76 serves as the catalytic Proton acceptor.

The protein belongs to the Maf family. It depends on a divalent metal cation as a cofactor.

The protein resides in the cytoplasm. It catalyses the reaction a ribonucleoside 5'-triphosphate + H2O = a ribonucleoside 5'-phosphate + diphosphate + H(+). The catalysed reaction is a 2'-deoxyribonucleoside 5'-triphosphate + H2O = a 2'-deoxyribonucleoside 5'-phosphate + diphosphate + H(+). Its function is as follows. Nucleoside triphosphate pyrophosphatase. May have a dual role in cell division arrest and in preventing the incorporation of modified nucleotides into cellular nucleic acids. This is Nucleoside triphosphate pyrophosphatase from Orientia tsutsugamushi (strain Boryong) (Rickettsia tsutsugamushi).